The primary structure comprises 623 residues: Chaperone protein HtpG (623 aa).

The a; substrate-binding stretch occupies residues 1–326; the sequence is MAEEKRQFQA…SQDLPLNVSR (326 aa). Residues 327-543 are b; that stretch reads EMLQHNPVLS…EGEMSMHLEK (217 aa). Positions 544–623 are c; that stretch reads MLRAHNQAPG…VSVMEKGLLG (80 aa).

This sequence belongs to the heat shock protein 90 family. Homodimer.

The protein resides in the cytoplasm. In terms of biological role, molecular chaperone. Has ATPase activity. This chain is Chaperone protein HtpG, found in Paramagnetospirillum magneticum (strain ATCC 700264 / AMB-1) (Magnetospirillum magneticum).